The following is a 260-amino-acid chain: Endonuclease NucS (260 aa).

This sequence belongs to the NucS endonuclease family.

It localises to the cytoplasm. Its function is as follows. Cleaves both 3' and 5' ssDNA extremities of branched DNA structures. The protein is Endonuclease NucS of Methanopyrus kandleri (strain AV19 / DSM 6324 / JCM 9639 / NBRC 100938).